Reading from the N-terminus, the 364-residue chain is Dihydroorotate dehydrogenase (quinone) (364 aa).

Residues 61–65 and T85 contribute to the FMN site; that span reads AGYDK. Substrate is bound at residue K65. Substrate is bound at residue 110-114; that stretch reads NRLGF. Residues N139 and N170 each coordinate FMN. N170 provides a ligand contact to substrate. S173 serves as the catalytic Nucleophile. N175 contacts substrate. FMN-binding residues include K215 and S243. Position 244-245 (244-245) interacts with substrate; that stretch reads NT. Residues G266, G295, and 316 to 317 contribute to the FMN site; that span reads YT.

The protein belongs to the dihydroorotate dehydrogenase family. Type 2 subfamily. In terms of assembly, monomer. FMN is required as a cofactor.

It is found in the cell membrane. The catalysed reaction is (S)-dihydroorotate + a quinone = orotate + a quinol. It functions in the pathway pyrimidine metabolism; UMP biosynthesis via de novo pathway; orotate from (S)-dihydroorotate (quinone route): step 1/1. Functionally, catalyzes the conversion of dihydroorotate to orotate with quinone as electron acceptor. This Brucella abortus (strain S19) protein is Dihydroorotate dehydrogenase (quinone).